Consider the following 37-residue polypeptide: Large ribosomal subunit protein bL36 (37 aa).

This sequence belongs to the bacterial ribosomal protein bL36 family.

The protein is Large ribosomal subunit protein bL36 of Polaromonas naphthalenivorans (strain CJ2).